A 207-amino-acid chain; its full sequence is Macrophage immunometabolism regulator (207 aa).

Position 1 is an N-acetylmethionine (M1). The tract at residues 1 to 41 is disordered; that stretch reads MEVDINGDSRSTLTTLPLPVAEGSSPGKAEAEKPRCSSTPC. S25 and S167 each carry phosphoserine.

The protein belongs to the UNC119-binding protein family. As to quaternary structure, interacts with UNC119 and UNC119B; interaction preferentially takes place when UNC119 and UNC119B are unliganded with myristoylated proteins. Highly expressed in photoreceptors.

Its subcellular location is the cytoplasm. It localises to the cell projection. The protein localises to the cilium. Functionally, regulates the macrophage function, by enhancing the resolution of inflammation and wound repair functions mediated by M2 macrophages. The regulation of macrophage function is, due at least in part, to its ability to inhibit glycolysis. May also play a role in trafficking of proteins via its interaction with UNC119 and UNC119B cargo adapters: may help the release of UNC119 and UNC119B cargo or the recycling of UNC119 and UNC119B. May play a role in ciliary membrane localization via its interaction with UNC119B and protein transport into photoreceptor cells. This Mus musculus (Mouse) protein is Macrophage immunometabolism regulator.